A 632-amino-acid polypeptide reads, in one-letter code: 1-deoxy-D-xylulose-5-phosphate synthase (632 aa).

Thiamine diphosphate is bound by residues H78 and 119–121; that span reads AHS. D150 is a Mg(2+) binding site. Residues 151 to 152, N179, Y286, and E368 each bind thiamine diphosphate; that span reads GA. Residue N179 coordinates Mg(2+).

This sequence belongs to the transketolase family. DXPS subfamily. Homodimer. Requires Mg(2+) as cofactor. The cofactor is thiamine diphosphate.

The enzyme catalyses D-glyceraldehyde 3-phosphate + pyruvate + H(+) = 1-deoxy-D-xylulose 5-phosphate + CO2. The protein operates within metabolic intermediate biosynthesis; 1-deoxy-D-xylulose 5-phosphate biosynthesis; 1-deoxy-D-xylulose 5-phosphate from D-glyceraldehyde 3-phosphate and pyruvate: step 1/1. Its function is as follows. Catalyzes the acyloin condensation reaction between C atoms 2 and 3 of pyruvate and glyceraldehyde 3-phosphate to yield 1-deoxy-D-xylulose-5-phosphate (DXP). In Albidiferax ferrireducens (strain ATCC BAA-621 / DSM 15236 / T118) (Rhodoferax ferrireducens), this protein is 1-deoxy-D-xylulose-5-phosphate synthase.